Here is a 436-residue protein sequence, read N- to C-terminus: Protein translocase subunit SecY (436 aa).

10 consecutive transmembrane segments (helical) span residues 18-38 (IAFT…PATG), 69-89 (LLQV…SIIV), 116-138 (YTRY…LART), 154-174 (ILTV…VMWF), 187-207 (MSLL…GQVV), 214-234 (VFAI…FVEE), 266-286 (MANV…GILI), 314-334 (PVYM…YVSI), 375-395 (VVGA…FAVI), and 396-416 (GTSQ…GVGL).

This sequence belongs to the SecY/SEC61-alpha family. Component of the Sec protein translocase complex. Heterotrimer consisting of SecY, SecE and SecG subunits. The heterotrimers can form oligomers, although 1 heterotrimer is thought to be able to translocate proteins. Interacts with the ribosome. Interacts with SecDF, and other proteins may be involved. Interacts with SecA.

Its subcellular location is the cell membrane. Functionally, the central subunit of the protein translocation channel SecYEG. Consists of two halves formed by TMs 1-5 and 6-10. These two domains form a lateral gate at the front which open onto the bilayer between TMs 2 and 7, and are clamped together by SecE at the back. The channel is closed by both a pore ring composed of hydrophobic SecY resides and a short helix (helix 2A) on the extracellular side of the membrane which forms a plug. The plug probably moves laterally to allow the channel to open. The ring and the pore may move independently. The chain is Protein translocase subunit SecY from Micrococcus luteus (Micrococcus lysodeikticus).